We begin with the raw amino-acid sequence, 344 residues long: Cyclin-G2 (344 aa).

Over residues 301–313 the composition is skewed to acidic residues; it reads ESESEDSCEDMSC. The disordered stretch occupies residues 301–320; that stretch reads ESESEDSCEDMSCGEESLSS.

Belongs to the cyclin family. Cyclin G subfamily. In terms of tissue distribution, high levels in cerebellum, thymus, spleen and prostate. Low levels in skeletal muscle.

The protein resides in the cytoplasm. Its function is as follows. May play a role in growth regulation and in negative regulation of cell cycle progression. The polypeptide is Cyclin-G2 (CCNG2) (Homo sapiens (Human)).